A 132-amino-acid chain; its full sequence is Large ribosomal subunit protein bL12 (132 aa).

Residues Ala-102–Gly-126 are compositionally biased toward basic and acidic residues. The disordered stretch occupies residues Ala-102–Lys-132.

Belongs to the bacterial ribosomal protein bL12 family. In terms of assembly, homodimer. Part of the ribosomal stalk of the 50S ribosomal subunit. Forms a multimeric L10(L12)X complex, where L10 forms an elongated spine to which 2 to 4 L12 dimers bind in a sequential fashion. Binds GTP-bound translation factors.

Forms part of the ribosomal stalk which helps the ribosome interact with GTP-bound translation factors. Is thus essential for accurate translation. This is Large ribosomal subunit protein bL12 from Rippkaea orientalis (strain PCC 8801 / RF-1) (Cyanothece sp. (strain PCC 8801)).